The following is a 359-amino-acid chain: 4-galactosyl-N-acetylglucosaminide 3-alpha-L-fucosyltransferase 9 (359 aa).

Residues 1 to 11 (MTSTSKGILRP) lie on the Cytoplasmic side of the membrane. Residues 12 to 32 (FLIVCVILACFMACLLIYIKP) form a helical; Signal-anchor for type II membrane protein membrane-spanning segment. Residues 33–359 (TNSWVFSPME…VGNLEKWFWN (327 aa)) lie on the Lumenal side of the membrane. N-linked (GlcNAc...) asparagine glycosylation occurs at Asn-62. An acceptor-binding region spans residues 63 to 168 (ETTILVWVWP…RRDSDIQVPY (106 aa)). A beta-D-galactosyl-(1-&gt;4)-N-acetyl-beta-D-glucosaminyl derivative is bound at residue Gln-75. Intrachain disulfides connect Cys-82-Cys-335, Cys-91-Cys-338, and Cys-190-Cys-238. A glycan (N-linked (GlcNAc...) asparagine) is linked at Asn-101. Glu-137 is a binding site for a beta-D-galactosyl-(1-&gt;4)-N-acetyl-beta-D-glucosaminyl derivative. The Nucleophile role is filled by Glu-137. Glu-137 provides a ligand contact to GDP-beta-L-fucose. An N-linked (GlcNAc...) asparagine glycan is attached at Asn-153. Positions 168, 192, 194, 195, 202, 226, 241, 246, 252, 255, and 256 each coordinate GDP-beta-L-fucose. Residues 169-326 (GFLTVSTNPF…NWRKDFTVNL (158 aa)) are donor-binding. The tract at residues 327-359 (PRFWESHACLACDHVKRHQEYKSVGNLEKWFWN) is acceptor-binding.

Belongs to the glycosyltransferase 10 family. In terms of assembly, homodimer. In terms of processing, N-glycosylated with complex-type N-glycans.

It is found in the golgi apparatus. The protein localises to the trans-Golgi network membrane. Its subcellular location is the golgi apparatus membrane. It carries out the reaction a beta-D-galactosyl-(1-&gt;4)-N-acetyl-beta-D-glucosaminyl derivative + GDP-beta-L-fucose = a beta-D-galactosyl-(1-&gt;4)-[alpha-L-fucosyl-(1-&gt;3)]-N-acetyl-beta-D-glucosaminyl derivative + GDP + H(+). The enzyme catalyses an alpha-Neu5Ac-(2-&gt;3)-beta-D-Gal-(1-&gt;4)-beta-D-GlcNAc-(1-&gt;3)-beta-D-Gal-(1-&gt;4)-beta-D-GlcNAc derivative + GDP-beta-L-fucose = an alpha-Neu5Ac-(2-&gt;3)-beta-D-Gal-(1-&gt;4)-beta-D-GlcNAc-(1-&gt;3)-beta-D-Gal-(1-&gt;4)-[alpha-L-Fuc-(1-&gt;3)]-beta-D-GlcNAc derivative + GDP + H(+). The catalysed reaction is alpha-N-glycoloylneuraminosyl-(2-&gt;3)-beta-D-galactosyl-(1-&gt;4)-N-acetyl-beta-D-glucosaminyl-(1-&gt;3)-beta-D-galactosyl-(1-&gt;4)-N-acetyl-beta-D-glucosaminyl-(1-&gt;3)-beta-D-galactosyl-(1-&gt;4)-beta-D-glucosyl-(1&lt;-&gt;1')-ceramide + GDP-beta-L-fucose = alpha-N-glycoloylneuraminosyl-(2-&gt;3)-beta-D-galactosyl-(1-&gt;4)-N-acetyl-beta-D-glucosaminyl-(1-&gt;3)-beta-D-galactosyl-(1-&gt;4)-[alpha-L-fucosyl-(1-&gt;3)]-N-acetyl-beta-D-glucosaminyl-(1-&gt;3)-beta-D-galactosyl-(1-&gt;4)-beta-D-glucosyl-(1&lt;-&gt;1')-ceramide + GDP + H(+). It catalyses the reaction alpha-D-galactosyl-(1-&gt;3)-beta-D-galactosyl-(1-&gt;4)-N-acetyl-beta-D-glucosaminyl-(1-&gt;3)-beta-D-galactosyl-(1-&gt;4)-beta-D-glucosyl-(1&lt;-&gt;1')-ceramide + GDP-beta-L-fucose = a neolactoside IV(3)-alpha-Gal,III(3)-alpha-Fuc-nLc4Cer + GDP + H(+). It carries out the reaction a neolactoside nLc4Cer + GDP-beta-L-fucose = a neolactoside III(3)-alpha-Fuc-nLc4Cer + GDP + H(+). The enzyme catalyses an N-acetyl-alpha-neuraminyl-(2-&gt;3)-beta-D-galactosyl-(1-&gt;4)-N-acetyl-beta-D-glucosaminyl derivative + GDP-beta-L-fucose = an alpha-Neu5Ac-(2-&gt;3)-beta-D-Gal-(1-&gt;4)-[alpha-L-Fuc-(1-&gt;3)]-beta-D-GlcNAc derivative + GDP + H(+). The catalysed reaction is beta-D-Gal-(1-&gt;4)-beta-D-GlcNAc-(1-&gt;3)-beta-D-Gal-(1-&gt;4)-D-Glc + GDP-beta-L-fucose = beta-D-Gal-(1-&gt;4)-[alpha-L-Fuc-(1-&gt;3)]-beta-D-GlcNAc-(1-&gt;3)-beta-D-Gal-(1-&gt;4)-D-Glc + GDP + H(+). It catalyses the reaction an alpha-L-Fuc-(1-&gt;2)-beta-D-Gal-(1-&gt;4)-beta-D-GlcNAc derivative + GDP-beta-L-fucose = an alpha-L-Fuc-(1-&gt;2)-beta-D-Gal-(1-&gt;4)-[alpha-L-Fuc-(1-&gt;3)]-beta-D-GlcNAc derivative + GDP + H(+). Its pathway is protein modification; protein glycosylation. It participates in glycolipid biosynthesis. With respect to regulation, activated by Mn2+. In terms of biological role, catalyzes alpha(1-&gt;3) linkage of fucosyl moiety transferred from GDP-beta-L-fucose to N-acetyl glucosamine (GlcNAc) within type 2 lactosamine (LacNAc, beta-D-Gal-(1-&gt;4)-beta-D-GlcNAc-) glycan attached to glycolipids and N- or O-linked glycoproteins. Fucosylates distal type 2 LacNAc and its fucosylated (H-type 2 LacNAc) and sialylated (sialyl-type 2 LacNAc) derivatives to form Lewis x (Lex) (CD15) and Lewis y (Ley) antigenic epitopes involved in cell adhesion and differentiation. Generates Lex epitopes in the brain, presumably playing a role in the maintenance of neuronal stemness and neurite outgrowth in progenitor neural cells. Fucosylates the internal type 2 LacNAc unit of the polylactosamine chain to form VIM-2 antigen that serves as recognition epitope for SELE. Can also modify milk oligosaccharides in particular type 2 tetrasaccharide LNnT. The protein is 4-galactosyl-N-acetylglucosaminide 3-alpha-L-fucosyltransferase 9 of Cricetulus griseus (Chinese hamster).